The following is an 84-amino-acid chain: Putative membrane protein insertion efficiency factor (84 aa).

Residues 61 to 84 (SQGFEDPLPPNTKRTNLTHGRQTK) form a disordered region. Positions 72-84 (TKRTNLTHGRQTK) are enriched in polar residues.

Belongs to the UPF0161 family.

It is found in the cell inner membrane. Its function is as follows. Could be involved in insertion of integral membrane proteins into the membrane. The sequence is that of Putative membrane protein insertion efficiency factor from Leptospira borgpetersenii serovar Hardjo-bovis (strain JB197).